Consider the following 883-residue polypeptide: Lethal(3)malignant brain tumor-like protein 3 (883 aa).

The interval 1 to 64 (MTESASSTSG…VKKATATTTW (64 aa)) is interaction with RBPJ. Required for transcription repressor activity on Notch target genes. A compositionally biased stretch (basic and acidic residues) spans 146-156 (HAKDKDQKDER). The disordered stretch occupies residues 146–223 (HAKDKDQKDE…RGDSAVLKQG (78 aa)). 2 stretches are compositionally biased toward acidic residues: residues 157–166 (DGGEDNDEED) and 185–194 (DDGEERDDEM). MBT repeat units follow at residues 232–332 (WCWA…LRPP), 340–439 (FNWQ…LITP), and 448–543 (FSWD…LQAP). The CCHHC-type; degenerate zinc-finger motif lies at 549 to 593 (LMEPSETGGCPTLGCRGVGHFKKSRYLGTQSGANCPYSEINLSKE). The tract at residues 595–768 (IFPDRLSGDT…TQQQAQTQQQ (174 aa)) is disordered. A compositionally biased stretch (basic and acidic residues) spans 616–662 (KRMDTRESSSSPETREKHANNFKEDSEKKKENEVKTSAEAKVVREEP). Lys638 participates in a covalent cross-link: Glycyl lysine isopeptide (Lys-Gly) (interchain with G-Cter in SUMO2). Composition is skewed to low complexity over residues 663–742 (TPSV…QQPQ) and 749–768 (QPQQ…TQQQ). The SAM domain maps to 811-875 (WSTDEVSEFI…FNSILMFKAA (65 aa)).

As to quaternary structure, interacts with RNF2. Interacts (via SAM domain) with SAMD1 (via SAM domain); the interaction mediates L3MBTL3 binding to chromatin. Interacts with RBPJ; the interaction is required for L3MBTL3 localization to chromatin and is impaired the Notch-derived peptides containing the intracellular domain (NICD). Interacts (via SAM domain) with KDM1A. Interacts with DCAF5. Interacts with DNMT1. Interacts with E2F1. Interacts with SOX2. Interacts with SFMBT1. As to expression, detected in hematopoietic progenitor cells in fetal liver. Detected in adult bone marrow, heart, brain, spleen, lung, liver, kidney and testis.

It is found in the nucleus. Functionally, is a negative regulator of Notch target genes expression, required for RBPJ-mediated transcriptional repression. It recruits KDM1A to Notch-responsive elements and promotes KDM1A-mediated H3K4me demethylation. Involved in the regulation of ubiquitin-dependent degradation of a set of methylated non-histone proteins, including SOX2. It acts as an adapter recruiting the CRL4-DCAF5 E3 ubiquitin ligase complex to methylated target proteins. Also involved in the regulation of ubiquitin-dependent degradation of methylated DNMT1 and E2F1. Required for normal maturation of myeloid progenitor cells. The protein is Lethal(3)malignant brain tumor-like protein 3 of Mus musculus (Mouse).